A 265-amino-acid chain; its full sequence is 3-methyl-2-oxobutanoate hydroxymethyltransferase (265 aa).

Residues Asp-45 and Asp-84 each coordinate Mg(2+). Residues 45–46 (DS), Asp-84, and Lys-112 each bind 3-methyl-2-oxobutanoate. Residue Glu-114 participates in Mg(2+) binding. Glu-181 (proton acceptor) is an active-site residue.

The protein belongs to the PanB family. As to quaternary structure, homodecamer; pentamer of dimers. Requires Mg(2+) as cofactor.

The protein localises to the cytoplasm. It carries out the reaction 3-methyl-2-oxobutanoate + (6R)-5,10-methylene-5,6,7,8-tetrahydrofolate + H2O = 2-dehydropantoate + (6S)-5,6,7,8-tetrahydrofolate. It functions in the pathway cofactor biosynthesis; (R)-pantothenate biosynthesis; (R)-pantoate from 3-methyl-2-oxobutanoate: step 1/2. In terms of biological role, catalyzes the reversible reaction in which hydroxymethyl group from 5,10-methylenetetrahydrofolate is transferred onto alpha-ketoisovalerate to form ketopantoate. This is 3-methyl-2-oxobutanoate hydroxymethyltransferase from Pseudoalteromonas atlantica (strain T6c / ATCC BAA-1087).